Reading from the N-terminus, the 283-residue chain is Apidaecins type 73 (283 aa).

Positions 1–18 (KNFALAILVVTFVVAVFG) are cleaved as a signal peptide. Propeptides lie at residues 19–41 (NTNL…EAEP), 62–69 (EAEPEAEP), 90–97 (EAELEAEP), 118–125 (EAEPEAEP), 146–153 (EAELEAEP), 174–181 (EAEPEAEP), 202–209 (EAEPEAEP), 230–237 (EAEPEAEP), and 258–265 (EAKPEAKP). Residues 19 to 283 (NTNLDPPTRP…PQPRPPHPRI (265 aa)) are disordered. Over residues 273 to 283 (IPQPRPPHPRI) the composition is skewed to pro residues.

Belongs to the apidaecin family.

The protein resides in the secreted. Functionally, apidaecins have bactericidal activity; predominantly against Gram-negative bacteria. They seem to interfere with cell propagation. This Apis mellifera (Honeybee) protein is Apidaecins type 73 (APID73).